Reading from the N-terminus, the 362-residue chain is Glutamate--cysteine ligase (362 aa).

It belongs to the glutamate--cysteine ligase type 2 family. YbdK subfamily.

It catalyses the reaction L-cysteine + L-glutamate + ATP = gamma-L-glutamyl-L-cysteine + ADP + phosphate + H(+). Its function is as follows. Catalyzes the synthesis of gamma-glutamylcysteine (gamma-GC), the main low-molecular-weight thiol compound instead of glutathione in halophilic archaea. The polypeptide is Glutamate--cysteine ligase (Natronomonas pharaonis (strain ATCC 35678 / DSM 2160 / CIP 103997 / JCM 8858 / NBRC 14720 / NCIMB 2260 / Gabara) (Halobacterium pharaonis)).